The chain runs to 298 residues: GTP cyclohydrolase FolE2 (298 aa).

Belongs to the GTP cyclohydrolase IV family.

The catalysed reaction is GTP + H2O = 7,8-dihydroneopterin 3'-triphosphate + formate + H(+). The protein operates within cofactor biosynthesis; 7,8-dihydroneopterin triphosphate biosynthesis; 7,8-dihydroneopterin triphosphate from GTP: step 1/1. In terms of biological role, converts GTP to 7,8-dihydroneopterin triphosphate. This chain is GTP cyclohydrolase FolE2, found in Pseudomonas paraeruginosa (strain DSM 24068 / PA7) (Pseudomonas aeruginosa (strain PA7)).